Reading from the N-terminus, the 415-residue chain is MSEVLQKAALAKEAAAEMVMKTTAEKNEALQCIADGLRNERRLILTENQKDIEAGRNRGLTPDIIDRLTLDEKRLLDIADAVELLIGLEDPVGESLETIQKENGLSIEKIRVPLGVVGMIYEARPNVTVDAATLCLKTGNAVVLRGSSSAIHSNIALVSVMKRALGLSKLPIDAVQLIEDTSKETAKQLFTLNDGLDVLIPRGGKNLIDLVVRESTVPVLETGAGNCHVYIDESADPQMASEVVINAKTQRPSVCNAIESLLIHEKWAEEHGRKLLNQLTEKGVELRGDQVICRLEPQAKQAEEADWGAEYLAPILSVKTVQDVQEAVRHIQQYGTNHSEAILTENAEHAAYFQTAVDAAAVYHNASTRFTDGFEFGYGAEIGISTQKLHARGPMGLPALTSTKIIIKGNGQIRV.

Belongs to the gamma-glutamyl phosphate reductase family.

It is found in the cytoplasm. It catalyses the reaction L-glutamate 5-semialdehyde + phosphate + NADP(+) = L-glutamyl 5-phosphate + NADPH + H(+). Its pathway is amino-acid biosynthesis; L-proline biosynthesis; L-glutamate 5-semialdehyde from L-glutamate: step 2/2. Catalyzes the NADPH-dependent reduction of L-glutamate 5-phosphate into L-glutamate 5-semialdehyde and phosphate. The product spontaneously undergoes cyclization to form 1-pyrroline-5-carboxylate. The protein is Gamma-glutamyl phosphate reductase of Bacillus velezensis (strain DSM 23117 / BGSC 10A6 / LMG 26770 / FZB42) (Bacillus amyloliquefaciens subsp. plantarum).